The primary structure comprises 335 residues: Ubiquinol oxidase 1b, mitochondrial (335 aa).

The transit peptide at 1-47 (MSSRMAGATLLRHLGPRLFAAEPVYSGLAASARGVMPAAARIFPARM) directs the protein to the mitochondrion. A helical membrane pass occupies residues 160-180 (ALLLETVAGVPGMVGGMLLHL). Residues glutamate 164, glutamate 203, and histidine 206 each contribute to the Fe cation site. A helical membrane pass occupies residues 222 to 242 (ALVLAAQGVFFNAYFVGYLVS). Fe cation is bound by residues glutamate 254, glutamate 305, and histidine 308.

It belongs to the alternative oxidase family. Requires Fe cation as cofactor.

The protein resides in the mitochondrion inner membrane. The catalysed reaction is 2 a ubiquinol + O2 = 2 a ubiquinone + 2 H2O. Catalyzes the cyanide-resistant oxidation of ubiquinol and the reduction of molecular oxygen to water, but does not translocate protons and consequently is not linked to oxidative phosphorylation. May increase respiration when the cytochrome respiratory pathway is restricted, or in response to low temperatures. This is Ubiquinol oxidase 1b, mitochondrial from Oryza sativa subsp. japonica (Rice).